A 226-amino-acid polypeptide reads, in one-letter code: Glycerol-3-phosphate acyltransferase (226 aa).

6 consecutive transmembrane segments (helical) span residues 1 to 21 (MGLWLSLCGAVVVVAYLLGSF), 56 to 76 (GPGAFVLGLDCLKGVLAIALV), 102 to 122 (LVTLAGIAAILGHSKSIFLGF), 134 to 154 (ILLAMNWQVGLATFGVFAVVV), 159 to 178 (IVSLSSIMGAIAVSIVMVVL), and 182 to 197 (LPYILFGIAGGLYVIL).

This sequence belongs to the PlsY family. As to quaternary structure, probably interacts with PlsX.

The protein localises to the cell inner membrane. The catalysed reaction is an acyl phosphate + sn-glycerol 3-phosphate = a 1-acyl-sn-glycero-3-phosphate + phosphate. It participates in lipid metabolism; phospholipid metabolism. Functionally, catalyzes the transfer of an acyl group from acyl-phosphate (acyl-PO(4)) to glycerol-3-phosphate (G3P) to form lysophosphatidic acid (LPA). This enzyme utilizes acyl-phosphate as fatty acyl donor, but not acyl-CoA or acyl-ACP. This Trichormus variabilis (strain ATCC 29413 / PCC 7937) (Anabaena variabilis) protein is Glycerol-3-phosphate acyltransferase.